A 399-amino-acid chain; its full sequence is Elongation factor Tu (399 aa).

In terms of domain architecture, tr-type G spans Lys10 to Lys209. Residues Gly19–Thr26 are G1. GTP is bound at residue Gly19 to Thr26. Thr26 lines the Mg(2+) pocket. A G2 region spans residues Gly60–Ala64. The G3 stretch occupies residues Asp81–Gly84. GTP-binding positions include Asp81–His85 and Asn136–Asp139. The interval Asn136–Asp139 is G4. The G5 stretch occupies residues Ser174–Leu176.

The protein belongs to the TRAFAC class translation factor GTPase superfamily. Classic translation factor GTPase family. EF-Tu/EF-1A subfamily. In terms of assembly, monomer.

It localises to the cytoplasm. It catalyses the reaction GTP + H2O = GDP + phosphate + H(+). Functionally, GTP hydrolase that promotes the GTP-dependent binding of aminoacyl-tRNA to the A-site of ribosomes during protein biosynthesis. The polypeptide is Elongation factor Tu (Campylobacter hominis (strain ATCC BAA-381 / DSM 21671 / CCUG 45161 / LMG 19568 / NCTC 13146 / CH001A)).